The sequence spans 341 residues: Golgi-associated RAB2 interactor protein 1B (341 aa).

The protein belongs to the GARIN family. In terms of tissue distribution, expressed in testis (at protein level).

Its subcellular location is the golgi apparatus. RAB2B effector protein required for accurate acrosome formation and normal male fertility. In complex with RAB2A/RAB2B, seems to suppress excessive vesicle trafficking during acrosome formation. This is Golgi-associated RAB2 interactor protein 1B from Mus musculus (Mouse).